The primary structure comprises 199 residues: Recombination protein RecR (199 aa).

The C4-type zinc finger occupies 58 to 73 (CVRCGNITNADLCGIC). A Toprim domain is found at 81-176 (GELCVVEDVA…QVTSLAQGVP (96 aa)).

Belongs to the RecR family.

May play a role in DNA repair. It seems to be involved in an RecBC-independent recombinational process of DNA repair. It may act with RecF and RecO. This Cereibacter sphaeroides (strain ATCC 17029 / ATH 2.4.9) (Rhodobacter sphaeroides) protein is Recombination protein RecR.